Reading from the N-terminus, the 139-residue chain is Small ribosomal subunit protein uS12m (139 aa).

Residues 1–29 constitute a mitochondrion transit peptide; that stretch reads MSWSGLLRGLSMSLNYGLALAPRPWGTRP. Positions 37–57 are disordered; it reads HRRGPPKFPPSKPGPTEGRPQ.

Belongs to the universal ribosomal protein uS12 family. As to quaternary structure, component of the mitochondrial ribosome small subunit (28S) which comprises a 12S rRNA and about 30 distinct proteins.

It is found in the mitochondrion. The protein is Small ribosomal subunit protein uS12m (MRPS12) of Bos taurus (Bovine).